Consider the following 184-residue polypeptide: Isopentenyl-diphosphate Delta-isomerase (184 aa).

Residues H25 and H32 each coordinate Mn(2+). In terms of domain architecture, Nudix hydrolase spans 30 to 164 (PLHLAFSCWL…PWAFSPWMVL (135 aa)). C67 is a catalytic residue. Residue H69 coordinates Mn(2+). Mg(2+) is bound at residue E87. Mn(2+) is bound by residues E114 and E116. E116 is a catalytic residue.

This sequence belongs to the IPP isomerase type 1 family. In terms of assembly, homodimer. Mg(2+) is required as a cofactor. The cofactor is Mn(2+).

It is found in the cytoplasm. The catalysed reaction is isopentenyl diphosphate = dimethylallyl diphosphate. The protein operates within isoprenoid biosynthesis; dimethylallyl diphosphate biosynthesis; dimethylallyl diphosphate from isopentenyl diphosphate: step 1/1. Catalyzes the 1,3-allylic rearrangement of the homoallylic substrate isopentenyl (IPP) to its highly electrophilic allylic isomer, dimethylallyl diphosphate (DMAPP). This is Isopentenyl-diphosphate Delta-isomerase from Klebsiella pneumoniae subsp. pneumoniae (strain ATCC 700721 / MGH 78578).